The primary structure comprises 786 residues: Signal transducer and activator of transcription 5B (786 aa).

Phosphotyrosine is present on Y90. Phosphoserine is present on S128. One can recognise an SH2 domain in the interval 589–686 (WNDGAILGFV…EVYSKYYTPV (98 aa)). A phosphotyrosine mark is found at Y682 and Y699.

Belongs to the transcription factor STAT family. As to quaternary structure, upon activation, forms a homodimer or a heterodimer with a related family member. Binds NR3C1. Interacts with NCOA1. Interacts with NMI. Interacts with SOCS7. Interacts (via SH2 domain) with INSR. Interacts with CPEB3; this inhibits STAT5B-mediated transcriptional activation. Post-translationally, tyrosine phosphorylated in response to signaling via activated KIT, resulting in translocation to the nucleus. Tyrosine phosphorylated in response to signaling via activated FLT3; wild-type FLT3 results in much weaker phosphorylation than constitutively activated mutant FLT3. Alternatively, can be phosphorylated by JAK2. Phosphorylation at Tyr-699 by PTK6 or HCK leads to an increase of its transcriptional activity.

It localises to the cytoplasm. It is found in the nucleus. Carries out a dual function: signal transduction and activation of transcription. Mediates cellular responses to the cytokine KITLG/SCF and other growth factors. Binds to the GAS element and activates PRL-induced transcription. Positively regulates hematopoietic/erythroid differentiation. This Rattus norvegicus (Rat) protein is Signal transducer and activator of transcription 5B (Stat5b).